Consider the following 242-residue polypeptide: MRGGVGTTTITAALAWSLQMLGENVLVVDACPDNLLRLSFNVDFTHRQGWARAMLDGQDWRDAGLRYTSQLDLLPFGQLSIEEQENPQHWQTRLSDICSGLQQLKASGRYQWILIDLPRDASQITHQLLSLCDHSLAIVNVDANCHIRLHQQALPDGAHILINDFRIGSQVQDDIYQLWLQSQRRLLPMLIHRDEAMAECLAAKQPVGEYRSDALAAEEILTLANWCLLNYSGLKTPVGSAS.

1–8 contacts ATP; sequence MRGGVGTT.

The protein belongs to the BcsQ family.

Its function is as follows. A C-terminal pseudogene fragment of BcsQ, which has a premature stop codon at position 6 of the intact protein. The mutation prevents cellulose synthesis, and has polar effects on transcription of downstream gene bcsA and probably also bcsB, bcsZ and bcsC. When the reading frame is restored cellulose biosynthesis is also restored, see (AC P0DP92) for an intact protein. May play a role in subcellular localization of an active cellulose biosynthesis apparatus at the bacterial cell pole. This Escherichia coli (strain K12) protein is Putative cellulose biosynthesis protein BcsQ (bcsQ).